A 441-amino-acid chain; its full sequence is Squalene synthase (441 aa).

Transmembrane regions (helical) follow at residues 293 to 313 (SFQF…LVFG) and 420 to 440 (FKFN…YWYA).

Belongs to the phytoene/squalene synthase family. Mg(2+) is required as a cofactor.

It localises to the endoplasmic reticulum membrane. The enzyme catalyses 2 (2E,6E)-farnesyl diphosphate + NADPH + H(+) = squalene + 2 diphosphate + NADP(+). It carries out the reaction 2 (2E,6E)-farnesyl diphosphate + NADH + H(+) = squalene + 2 diphosphate + NAD(+). Its pathway is terpene metabolism; lanosterol biosynthesis; lanosterol from farnesyl diphosphate: step 1/3. Functionally, catalyzes the condensation of 2 two farnesyl pyrophosphate moieties to form squalene. It is the first committed enzyme of the sterol biosynthesis pathway. Required for the biosynthesis of ergosterol. The protein is Squalene synthase (ERG9) of Eremothecium gossypii (strain ATCC 10895 / CBS 109.51 / FGSC 9923 / NRRL Y-1056) (Yeast).